We begin with the raw amino-acid sequence, 350 residues long: Flagellar filament outer layer protein (350 aa).

Residues 1–20 form the signal peptide; the sequence is MKKAVVLSAVALLSGVCAVA.

In terms of assembly, the flagellum consists of an outer layer composed of repeating units of FlaA around a core that contains several antigenically related polypeptides.

The protein localises to the periplasmic flagellum. It is found in the periplasm. In terms of biological role, component of the outer layer of the flagella. The sequence is that of Flagellar filament outer layer protein (flaA) from Treponema pallidum (strain Nichols).